A 518-amino-acid chain; its full sequence is ETHYLENE INSENSITIVE 3-like 2 protein (518 aa).

Positions 37 to 73 (DDLSSDEEMEIEELEKKIWRDKQRLKRLKEMAKNGLG) form a coiled coil. The disordered stretch occupies residues 450-518 (FNHPNDLYRP…GQELPTSWIQ (69 aa)). Polar residues-rich tracts occupy residues 475 to 484 (PSPSTLNQNL) and 500 to 518 (GTEN…SWIQ).

This sequence belongs to the EIN3 family. Acts as a homodimer to bind the primary ethylene response element.

Its subcellular location is the nucleus. Probable transcription factor acting as a positive regulator in the ethylene response pathway. Could bind the primary ethylene response element present in the ETHYLENE-RESPONSE-FACTOR1 promoter. The protein is ETHYLENE INSENSITIVE 3-like 2 protein (EIL2) of Arabidopsis thaliana (Mouse-ear cress).